Consider the following 332-residue polypeptide: CAX-interacting protein 4 (332 aa).

Residues 33 to 59 form a disordered region; the sequence is GYDPYAPTSKEEPKTTQQKTEDPENSY. Residues 41–54 are compositionally biased toward basic and acidic residues; the sequence is SKEEPKTTQQKTED. Residues 81-98 form a CCHC-type zinc finger; it reads GSCKKCGRVGHLTFQCRN. Residues 124–133 are compositionally biased toward basic and acidic residues; that stretch reads IRRGVGKGEV. The segment at 124-332 is disordered; it reads IRRGVGKGEV…RKRHHRKERE (209 aa). The span at 134–153 shows a compositional bias: acidic residues; it reads EEVSSEEEEESESSDSDVDS. Basic and acidic residues predominate over residues 154-163; the sequence is EMERIIAERF. 2 stretches are compositionally biased toward basic residues: residues 198–214 and 227–236; these read RKRR…HKRR and SKRRKERRGR. Residues 241 to 250 show a composition bias toward acidic residues; it reads DDSDESEDED. Composition is skewed to basic residues over residues 254-269 and 314-332; these read VKRK…RSRR and SSKR…KERE.

In terms of assembly, interacts with CAX1. In terms of tissue distribution, expressed in leaves, stems and roots, and at lower levels in flowers.

Its subcellular location is the nucleus. Its function is as follows. May regulate CAX1 cation transporter. The sequence is that of CAX-interacting protein 4 (CXIP4) from Arabidopsis thaliana (Mouse-ear cress).